A 391-amino-acid polypeptide reads, in one-letter code: Coiled-coil domain-containing protein 85C (391 aa).

Coiled-coil stretches lie at residues 19-86 (EELL…RELC) and 116-146 (KEVG…KEII). Disordered stretches follow at residues 155-238 (GAGS…LNDS) and 278-303 (PYHS…TRVT). Residues 157–175 (GSRSSIDSQNSLTNLNGSS) are compositionally biased toward polar residues. The span at 182–194 (DGSSTSSTGSAGS) shows a compositional bias: low complexity. Over residues 280–303 (HSESQLSPLPQYQEPLQNGSTRVT) the composition is skewed to polar residues.

The protein belongs to the CCDC85 family.

The protein localises to the cell junction. The protein resides in the tight junction. Its subcellular location is the adherens junction. Its function is as follows. May play a role in cell-cell adhesion and epithelium development through its interaction with proteins of the beta-catenin family. May play an important role in cortical development, especially in the maintenance of radial glia. This Xenopus tropicalis (Western clawed frog) protein is Coiled-coil domain-containing protein 85C (ccdc85c).